A 114-amino-acid polypeptide reads, in one-letter code: Fluoride-specific ion channel FluC 1 (114 aa).

Helical transmembrane passes span 23–43, 52–72, and 84–104; these read ATLT…SYVF, LSTA…TLSV, and FLAM…SHLG. Residues Gly62 and Thr65 each contribute to the Na(+) site.

This sequence belongs to the fluoride channel Fluc/FEX (TC 1.A.43) family.

The protein localises to the cell membrane. It carries out the reaction fluoride(in) = fluoride(out). Its activity is regulated as follows. Na(+) is not transported, but it plays an essential structural role and its presence is essential for fluoride channel function. In terms of biological role, fluoride-specific ion channel. Important for reducing fluoride concentration in the cell, thus reducing its toxicity. In Desulfitobacterium hafniense (strain Y51), this protein is Fluoride-specific ion channel FluC 1.